We begin with the raw amino-acid sequence, 210 residues long: Viral protein 1 (210 aa).

This chain is Viral protein 1, found in Chaetoceros (Chaetoceros sp. DNA virus 7).